The chain runs to 544 residues: MAKSIIFSEEARRALEHGMDILAEAVAVTLGPKGRNVVLEKKFGAPQIINDGVTIAKEIELEDHIENTGVSLIRQAASKTNDTAGDGTTTATVLAHAMVKEGLKNVAAGANPIALKRGIDKAVKFLVDKIAEHARPVEDSKAIAQVAAISAGNDEEVGRMIAEAMDKVGREGVISLEEGKSMTTELEVTEGMRFDKGYISPYFVTDTERMEAVLENPYILITDKKITLVQDLVPVLEQVARAGRPLLIIAEDIEKEALATLVVNKLRGVLSVVAVKAPGFGDRRKAMLEDIAILTGGEVISEERGLKLENARLDSFGTARRVTVTKDNTTIVAEGNEAAVKARCEQIRRQIEETDSTYDKEKLQERLAKLSGGVAVIKVGAATETEMKDRKLRLEDAINATKAAVEEGIVPGGGTTLAHLIPVVTEWAQANLSGDELVGANLVARALGAPLRRIAENAGQNGSIVLERVKDKPFNTGYDAQNDAFVDMFEAGIVDPAKVTRSALQNAASIAGMVLTTEAIVVDKPEPKTNTPASSGSGMSDYDY.

Residues 29–32 (TLGP), 86–90 (DGTTT), Gly-413, and Asp-495 each bind ATP. The disordered stretch occupies residues 525–544 (PEPKTNTPASSGSGMSDYDY). Polar residues predominate over residues 528-538 (KTNTPASSGSG).

Belongs to the chaperonin (HSP60) family. In terms of assembly, forms a cylinder of 14 subunits composed of two heptameric rings stacked back-to-back. Interacts with the co-chaperonin GroES.

It localises to the cytoplasm. It catalyses the reaction ATP + H2O + a folded polypeptide = ADP + phosphate + an unfolded polypeptide.. Its function is as follows. Together with its co-chaperonin GroES, plays an essential role in assisting protein folding. The GroEL-GroES system forms a nano-cage that allows encapsulation of the non-native substrate proteins and provides a physical environment optimized to promote and accelerate protein folding. This is Chaperonin GroEL 1 from Synechococcus sp. (strain JA-2-3B'a(2-13)) (Cyanobacteria bacterium Yellowstone B-Prime).